A 1323-amino-acid chain; its full sequence is Glutamate receptor ionotropic, NMDA 2D (1323 aa).

Residues 1-27 (MRGAGGPRGPRGPAKMLLLLALACASP) form the signal peptide. Over 28-579 (FPEEVPGPGA…SPSAFLEPYS (552 aa)) the chain is Extracellular. An N-linked (GlcNAc...) asparagine glycan is attached at Asn-89. A disulfide bridge links Cys-101 with Cys-345. Asn-349, Asn-363, Asn-381, and Asn-464 each carry an N-linked (GlcNAc...) asparagine glycan. 2 disulfides stabilise this stretch: Cys-452–Cys-480 and Cys-459–Cys-481. L-glutamate-binding residues include Ser-536, Thr-538, and Arg-543. An N-linked (GlcNAc...) asparagine glycan is attached at Asn-566. Residues 580–601 (PAVWVMMFVMCLTVVAVTVFIF) traverse the membrane as a helical segment. Topologically, residues 602-626 (EYLSPVGYNRSLATGKRPGGSTFTI) are cytoplasmic. An intramembrane region (discontinuously helical) is located at residues 627-638 (GKSIWLLWALVF). The pore-forming stretch occupies residues 628–647 (KSIWLLWALVFNNSVPVENP). Residues 639–650 (NNSVPVENPRGT) lie on the Cytoplasmic side of the membrane. A helical membrane pass occupies residues 651–671 (TSKIMVLVWAFFAVIFLASYT). The Extracellular portion of the chain corresponds to 672–840 (ANLAAFMIQE…EVMSSKLDID (169 aa)). The N-linked (GlcNAc...) asparagine glycan is linked to Asn-712. L-glutamate is bound by residues Ser-714, Thr-715, and Asp-756. Residues Cys-770 and Cys-825 are joined by a disulfide bond. Residues 841–864 (NMAGVFYMLLVAMGLSLLVFAWEH) form a helical membrane-spanning segment. Residues 865–1323 (LVYWRLRHCL…AHFSSLESEV (459 aa)) are Cytoplasmic-facing. Disordered stretches follow at residues 897 to 952 (EAAP…PGGA), 977 to 1112 (AAPR…SLGG), and 1201 to 1323 (PWAA…ESEV). Positions 899-929 (APPPAKPPPPPQPLPSPAYPAARPPPGPAPF) are enriched in pro residues. The span at 931-940 (PRERAAADRW) shows a compositional bias: basic and acidic residues. A compositionally biased stretch (low complexity) spans 977-986 (AAPRGAAGRP). Over residues 987 to 1001 (LSPPTTQPPQKPPPS) the composition is skewed to pro residues. The segment covering 1030 to 1039 (AAAAAAVGPP) has biased composition (low complexity). The segment covering 1080–1092 (TAPPPRRAAPPPC) has biased composition (pro residues). The segment covering 1208–1228 (PRRRARCGCPRPHPHRPRASH) has biased composition (basic residues). Position 1303 is an omega-N-methylarginine (Arg-1303). Ser-1313 carries the phosphoserine modification. The short motif at 1321-1323 (SEV) is the PDZ-binding element.

The protein belongs to the glutamate-gated ion channel (TC 1.A.10.1) family. NR2D/GRIN2D subfamily. In terms of assembly, heterotetramer. Forms heterotetrameric channels composed of two GluN1/zeta subunits (GRIN1), and two identical GluN2/epsilon subunits (GRIN2A, GRIN2B, GRIN2C or GRIN2D) or GluN3 subunits (GRIN3A or GRIN3B) (in vitro). In vivo, the subunit composition may depend on the expression levels of the different subunits. Interacts with PDZ domains of PATJ and DLG4. As to expression, detected in neonate brain synaptosomes (at protein level).

Its subcellular location is the cell membrane. The protein resides in the postsynaptic cell membrane. It carries out the reaction Ca(2+)(in) = Ca(2+)(out). It catalyses the reaction Na(+)(in) = Na(+)(out). The catalysed reaction is K(+)(in) = K(+)(out). Its function is as follows. Component of N-methyl-D-aspartate (NMDA) receptors (NMDARs) that function as heterotetrameric, ligand-gated cation channels with high calcium permeability and voltage-dependent block by Mg(2+). Participates in synaptic plasticity for learning and memory formation. Channel activation requires binding of the neurotransmitter L-glutamate to the GluN2 subunit, glycine or D-serine binding to the GluN1 subunit, plus membrane depolarization to eliminate channel inhibition by Mg(2+). NMDARs mediate simultaneously the potasium efflux and the influx of calcium and sodium. Each GluN2 subunit confers differential attributes to channel properties, including activation, deactivation and desensitization kinetics, pH sensitivity, Ca2(+) permeability, and binding to allosteric modulators. The chain is Glutamate receptor ionotropic, NMDA 2D from Mus musculus (Mouse).